We begin with the raw amino-acid sequence, 895 residues long: AP-1 complex subunit gamma (895 aa).

HEAT repeat units lie at residues 130 to 166 (TAMA…LRKV), 167 to 205 (PDLT…MDST), 211 to 256 (KKMV…ILGQ), 301 to 339 (NGLK…TDIQ), and 341 to 376 (VQRH…ESNI). 3 disordered regions span residues 591–687 (KQEE…MNNM), 706–733 (NNNS…NNKS), and 746–770 (QLTP…QTSV). 5 stretches are compositionally biased toward low complexity: residues 604-626 (PTQT…QSSQ), 639-658 (QSSA…GGNA), 675-687 (NGNM…MNNM), 706-731 (NNNS…NNNN), and 746-765 (QLTP…LSPT). Residues 775–893 (PQPLTFLVYQ…SDVPDTPLPS (119 aa)) form the GAE domain.

Belongs to the adaptor complexes large subunit family. As to quaternary structure, adaptor protein complex 1 (AP-1) is a heterotetramer composed of two large adaptins (gamma-type subunit and beta-type subunit), a medium adaptin (mu-type subunit) and a small adaptin (sigma-type subunit). Interacts with rhgA.

It localises to the golgi apparatus. The protein localises to the trans-Golgi network. It is found in the cytoplasmic vesicle. The protein resides in the clathrin-coated vesicle membrane. Functionally, subunit of clathrin-associated adaptor protein complex 1 that plays a role in protein sorting in the trans-Golgi network (TGN) and endosomes. The AP complexes mediate the recruitment of clathrin to membranes and the recognition of sorting signals within the cytosolic tails of transmembrane cargo molecules. Also involved in early steps of phagocytosis and macropinocytosis. This is AP-1 complex subunit gamma (ap1g1) from Dictyostelium discoideum (Social amoeba).